A 30-amino-acid chain; its full sequence is LIM and SH3 domain protein 1 (30 aa).

Position 1 is an N-acetylmethionine (methionine 1). The LIM zinc-binding domain occupies 5-30 (CARCGKIVYPTEKVNCLDKFWHKACF).

Interacts with F-actin. Interacts with ANKRD54. Interacts with KBTBD10. Phosphorylated.

Its subcellular location is the cytoplasm. The protein localises to the cell cortex. It localises to the cytoskeleton. Plays an important role in the regulation of dynamic actin-based, cytoskeletal activities. Agonist-dependent changes in LASP1 phosphorylation may also serve to regulate actin-associated ion transport activities, not only in the parietal cell but also in certain other F-actin-rich secretory epithelial cell types. The sequence is that of LIM and SH3 domain protein 1 (LASP1) from Sus scrofa (Pig).